Reading from the N-terminus, the 596-residue chain is Putative ankyrin repeat protein FPV024 (596 aa).

ANK repeat units follow at residues 5–34 (KLRKDLHRTIRTRDLNAVKHIILKKYTFSN), 37–66 (ALSTPLYLAVSNSDIDIVKFLLDNGADINK), 68–96 (KSPPLHKAINLGNVEMVKLLVDHGADIEK), 99–128 (LGNSPLYLALCKRNTNITKYLLERGADPNT), 130–158 (FINYCDAIYNKIPIDIFKILIKYKVSLNI), 162–191 (HFKTPIYYAIKCTNYPLIKLLLENNASLTI), 195–225 (YNNHYLITAVKHNCDISILRLLIKYGVPVNE), 229–258 (LERTSLHYCVSAGKHDILKLLLDYDADPNI), 262–291 (CLGTPLHYAVSRNDIIATTLLIEKGANVNI), 295–324 (TIDTVLNIAVGNRNKILINLLLMYGANTRL), 326–355 (SRNPLIHKALETKDINILSEILNHGAEVNI), 359–389 (EGYTPLYIAIITFMQIKFAKLLLRYGSNPNM), and 394–423 (NENTPLHGAILSNRLDSVELLMSYNVDVHS).

The polypeptide is Putative ankyrin repeat protein FPV024 (Fowlpox virus (strain NVSL) (FPV)).